A 501-amino-acid polypeptide reads, in one-letter code: Cytochrome P450 4c21 (501 aa).

Heme-binding residues include Glu309 and Cys447.

The protein belongs to the cytochrome P450 family. The cofactor is heme.

It localises to the endoplasmic reticulum membrane. The protein resides in the microsome membrane. The enzyme catalyses an organic molecule + reduced [NADPH--hemoprotein reductase] + O2 = an alcohol + oxidized [NADPH--hemoprotein reductase] + H2O + H(+). This Blattella germanica (German cockroach) protein is Cytochrome P450 4c21 (CYP4C21).